We begin with the raw amino-acid sequence, 291 residues long: Probable 2-(5''-triphosphoribosyl)-3'-dephosphocoenzyme-A synthase (291 aa).

The protein belongs to the CitG/MdcB family.

The enzyme catalyses 3'-dephospho-CoA + ATP = 2'-(5''-triphospho-alpha-D-ribosyl)-3'-dephospho-CoA + adenine. In terms of biological role, involved in the formation of 2-(5''-phosphoribosyl)-3'-dephosphocoenzyme-A, the prosthetic group of the acyl-carrier protein of the malonate decarboxylase. In Pseudomonas savastanoi pv. phaseolicola (strain 1448A / Race 6) (Pseudomonas syringae pv. phaseolicola (strain 1448A / Race 6)), this protein is Probable 2-(5''-triphosphoribosyl)-3'-dephosphocoenzyme-A synthase.